Reading from the N-terminus, the 258-residue chain is Peptidase inhibitor 15 (258 aa).

The N-terminal stretch at 1–21 (MTIIAAISCVFLFSILCETSA) is a signal peptide. Positions 22 to 60 (LVLPNSTDLLLSNNNFTDIETALAAHLDSAKIPKARRKR) are excised as a propeptide. N-linked (GlcNAc...) asparagine glycans are attached at residues Asn-26, Asn-36, and Asn-124. The 141-residue stretch at 71–211 (LDYHNQVRGK…RRAVYLVCNY (141 aa)) folds into the SCP domain.

The protein belongs to the CRISP family.

Its subcellular location is the secreted. Its function is as follows. Serine protease inhibitor which displays weak inhibitory activity against trypsin. May play a role in facial patterning during embryonic development. The polypeptide is Peptidase inhibitor 15 (PI15) (Gallus gallus (Chicken)).